The following is a 245-amino-acid chain: Dehydrogenase/reductase SDR family member 6 (245 aa).

NAD(+) contacts are provided by residues 16–18 (QGI), D37, and D58. R144 lines the substrate pocket. Catalysis depends on Y147, which acts as the Proton acceptor. NAD(+) contacts are provided by residues K151 and 180 to 184 (VDTPS). 2 residues coordinate substrate: R188 and R205.

It belongs to the short-chain dehydrogenases/reductases (SDR) family. As to quaternary structure, homotetramer.

It localises to the cytoplasm. The catalysed reaction is cis-4-hydroxy-L-proline + NAD(+) = 4-oxo-L-proline + NADH + H(+). It catalyses the reaction (R)-3-hydroxybutanoate + NAD(+) = acetoacetate + NADH + H(+). The protein operates within amino-acid metabolism. It functions in the pathway siderophore biosynthesis. NAD(H)-dependent dehydrogenase/reductase with a preference for cyclic substrates. Catalyzes stereoselective conversion of 4-oxo-L-proline to cis-4-hydroxy-L-proline, likely a detoxification mechanism for ketoprolines. Mediates the formation of 2,5-dihydroxybenzoate (2,5-DHBA), a siderophore that chelates free cytoplasmic iron and associates with LCN2, thereby regulating iron transport and homeostasis while protecting cells against free radical-induced oxidative stress. The iron-siderophore complex is imported into mitochondria, providing an iron source for mitochondrial metabolic processes in particular heme synthesis. May act as a 3-hydroxybutyrate dehydrogenase. This chain is Dehydrogenase/reductase SDR family member 6, found in Rattus norvegicus (Rat).